The following is a 467-amino-acid chain: Tubulin beta-1 chain (467 aa).

The GTP site is built by Gln11, Glu69, Ser138, Gly142, Thr143, Gly144, Asn204, and Asn226. Glu69 serves as a coordination point for Mg(2+). Residues Thr429–Glu444 are compositionally biased toward acidic residues. The interval Thr429 to Arg448 is disordered.

Belongs to the tubulin family. As to quaternary structure, dimer of alpha and beta chains. A typical microtubule is a hollow water-filled tube with an outer diameter of 25 nm and an inner diameter of 15 nM. Alpha-beta heterodimers associate head-to-tail to form protofilaments running lengthwise along the microtubule wall with the beta-tubulin subunit facing the microtubule plus end conferring a structural polarity. Microtubules usually have 13 protofilaments but different protofilament numbers can be found in some organisms and specialized cells. Mg(2+) is required as a cofactor.

The protein resides in the cytoplasm. The protein localises to the cytoskeleton. It localises to the spindle. Its subcellular location is the nucleus. Tubulin is the major constituent of microtubules, a cylinder consisting of laterally associated linear protofilaments composed of alpha- and beta-tubulin heterodimers. Microtubules grow by the addition of GTP-tubulin dimers to the microtubule end, where a stabilizing cap forms. Below the cap, tubulin dimers are in GDP-bound state, owing to GTPase activity of alpha-tubulin. This chain is Tubulin beta-1 chain (BETA), found in Physarum polycephalum (Slime mold).